The following is an 88-amino-acid chain: UPF0250 protein Ssed_3490 (88 aa).

The protein belongs to the UPF0250 family.

The chain is UPF0250 protein Ssed_3490 from Shewanella sediminis (strain HAW-EB3).